A 334-amino-acid chain; its full sequence is Anthranilate phosphoribosyltransferase (334 aa).

5-phospho-alpha-D-ribose 1-diphosphate is bound by residues glycine 81, glycine 84–aspartate 85, threonine 89, asparagine 91–threonine 94, lysine 109–serine 117, and alanine 121. Glycine 81 provides a ligand contact to anthranilate. Serine 93 is a Mg(2+) binding site. Anthranilate is bound at residue arginine 167. Residues aspartate 225 and glutamate 226 each coordinate Mg(2+).

Belongs to the anthranilate phosphoribosyltransferase family. In terms of assembly, homodimer. Mg(2+) serves as cofactor.

The catalysed reaction is N-(5-phospho-beta-D-ribosyl)anthranilate + diphosphate = 5-phospho-alpha-D-ribose 1-diphosphate + anthranilate. Its pathway is amino-acid biosynthesis; L-tryptophan biosynthesis; L-tryptophan from chorismate: step 2/5. In terms of biological role, catalyzes the transfer of the phosphoribosyl group of 5-phosphorylribose-1-pyrophosphate (PRPP) to anthranilate to yield N-(5'-phosphoribosyl)-anthranilate (PRA). This Actinobacillus pleuropneumoniae serotype 5b (strain L20) protein is Anthranilate phosphoribosyltransferase.